The primary structure comprises 176 residues: Zinc finger protein 428 (176 aa).

Positions 1-152 are disordered; that stretch reads MTETREPTET…EEEGGTYHCT (152 aa). The segment covering 16-46 has biased composition (acidic residues); the sequence is LEEDDEDLSPEPDSEEEEEEEEEETTDDPEY. Phosphothreonine is present on Thr-96. A compositionally biased stretch (basic and acidic residues) spans 126-138; the sequence is PSRTGETRPAGRD. The segment at 149–171 adopts a C2H2-type zinc-finger fold; that stretch reads YHCTECEDSFDNLGELHGHFMLH.

The chain is Zinc finger protein 428 (Znf428) from Mus musculus (Mouse).